The sequence spans 92 residues: Small ribosomal subunit protein uS17 (92 aa).

It belongs to the universal ribosomal protein uS17 family. Part of the 30S ribosomal subunit.

Its function is as follows. One of the primary rRNA binding proteins, it binds specifically to the 5'-end of 16S ribosomal RNA. The chain is Small ribosomal subunit protein uS17 from Cupriavidus metallidurans (strain ATCC 43123 / DSM 2839 / NBRC 102507 / CH34) (Ralstonia metallidurans).